Reading from the N-terminus, the 440-residue chain is Zinc finger MYND domain-containing protein 10 (440 aa).

Residues Q366–K440 form an interaction with DNAAF11 region. Zn(2+) is bound by residues C394, C397, C405, C408, C414, C418, H426, and C430. The segment at C394 to C430 adopts an MYND-type zinc-finger fold.

Belongs to the ZMYND10 family. As to quaternary structure, interacts (via C-terminus) with DNAAF11 (via CS domain); this interaction stabilizes DNAAF11 at the protein level. Interacts (via C-terminus) with DNAL1; this interaction stabilizes DNAL1 at the protein level. Interacts with DNAAF4, HSPA8, IQUB, RUVBL2 and DYNTL5.

The protein localises to the cytoplasm. Its subcellular location is the cytoskeleton. It localises to the microtubule organizing center. It is found in the centrosome. The protein resides in the centriolar satellite. The protein localises to the apical cell membrane. Its subcellular location is the dynein axonemal particle. Plays a role in axonemal structure organization and motility. Involved in axonemal pre-assembly of inner and outer dynein arms (IDA and ODA, respectively) for proper axoneme building for cilia motility. May act by indirectly regulating transcription of dynein proteins. The protein is Zinc finger MYND domain-containing protein 10 of Homo sapiens (Human).